Reading from the N-terminus, the 98-residue chain is UPF0390 protein zgc136864 (98 aa).

Over residues M1–G30 the composition is skewed to basic residues. 2 disordered regions span residues M1–A38 and T63–K98. Over residues K83 to K98 the composition is skewed to low complexity.

Belongs to the UPF0390 family.

This is UPF0390 protein zgc136864 from Danio rerio (Zebrafish).